The following is a 530-amino-acid chain: Arginine--tRNA ligase (530 aa).

The short motif at 113 to 123 (ANPTGPLHIGH) is the 'HIGH' region element.

Belongs to the class-I aminoacyl-tRNA synthetase family. As to quaternary structure, monomer.

Its subcellular location is the cytoplasm. It catalyses the reaction tRNA(Arg) + L-arginine + ATP = L-arginyl-tRNA(Arg) + AMP + diphosphate. This Campylobacter jejuni subsp. jejuni serotype O:2 (strain ATCC 700819 / NCTC 11168) protein is Arginine--tRNA ligase.